A 433-amino-acid polypeptide reads, in one-letter code: tRNA (guanine(10)-N(2))-methyltransferase (433 aa).

It belongs to the class I-like SAM-binding methyltransferase superfamily. TRM11 methyltransferase family. As to quaternary structure, interacts with TRM112.

It localises to the cytoplasm. The catalysed reaction is guanosine(10) in tRNA + S-adenosyl-L-methionine = N(2)-methylguanosine(10) in tRNA + S-adenosyl-L-homocysteine + H(+). Catalytic subunit of an S-adenosyl-L-methionine-dependent tRNA methyltransferase complex that mediates the methylation of the guanosine nucleotide at position 10 (m2G10) in tRNAs. The chain is tRNA (guanine(10)-N(2))-methyltransferase (TRM11) from Saccharomyces cerevisiae (strain ATCC 204508 / S288c) (Baker's yeast).